Consider the following 64-residue polypeptide: Large ribosomal subunit protein bL35 (64 aa).

This sequence belongs to the bacterial ribosomal protein bL35 family.

The polypeptide is Large ribosomal subunit protein bL35 (Wolinella succinogenes (strain ATCC 29543 / DSM 1740 / CCUG 13145 / JCM 31913 / LMG 7466 / NCTC 11488 / FDC 602W) (Vibrio succinogenes)).